The following is a 444-amino-acid chain: Putative zinc metalloprotease PD_0327 (444 aa).

H22 serves as a coordination point for Zn(2+). E23 is a catalytic residue. Residue H26 participates in Zn(2+) binding. A helical membrane pass occupies residues 98–120 (IAIVAAGPLANLLLCMLLLWVLF). The PDZ domain maps to 192 to 278 (TLELSKLKQP…HPGMIEIRRG (87 aa)). The next 2 membrane-spanning stretches (helical) occupy residues 371–393 (VGWF…LFPI) and 418–440 (AMAA…AFYN).

Belongs to the peptidase M50B family. Requires Zn(2+) as cofactor.

The protein localises to the cell inner membrane. The protein is Putative zinc metalloprotease PD_0327 of Xylella fastidiosa (strain Temecula1 / ATCC 700964).